Consider the following 565-residue polypeptide: NAD-dependent malic enzyme (565 aa).

Tyr-104 (proton donor) is an active-site residue. Arg-157 lines the NAD(+) pocket. Lys-175 serves as the catalytic Proton acceptor. A divalent metal cation is bound by residues Glu-246, Asp-247, and Asp-270. Residues Asp-270 and Asn-418 each contribute to the NAD(+) site.

Belongs to the malic enzymes family. In terms of assembly, homotetramer. Mg(2+) serves as cofactor. The cofactor is Mn(2+).

The catalysed reaction is (S)-malate + NAD(+) = pyruvate + CO2 + NADH. It catalyses the reaction oxaloacetate + H(+) = pyruvate + CO2. This chain is NAD-dependent malic enzyme, found in Erwinia tasmaniensis (strain DSM 17950 / CFBP 7177 / CIP 109463 / NCPPB 4357 / Et1/99).